The primary structure comprises 214 residues: MLAFVKCFSLKRAKHPRGYEDPHVLASETPFTVNEIEALHDLFKKLSTSIINDGLIHKEEFLLALFRNGSMQNLFADRVFYMFDRKRNGVIEFGEFVRSLSIFHPYTPEHEKSAFMFKLFDLHGTGFIEPHELKKMVGALLGETDLELSEESIEAIVEQTMLEVDTNKDGKIDEEEWKELVAKNPSILKNMTLPYLKEVTLAFPSFVLDSEVED.

4 consecutive EF-hand domains span residues 35-70 (EIEA…RNGS), 71-106 (MQNL…FHPY), 108-143 (PEHE…LLGE), and 152-187 (SIEA…NPSI). 5 residues coordinate Ca(2+): Asp-165, Asn-167, Asp-169, Lys-171, and Glu-176. Position 205 is a phosphoserine (Ser-205).

It belongs to the calcineurin regulatory subunit family. Interacts with CIPK23. Interacts with CIPK14 at the cell membrane exclusively.

It localises to the cytoplasm. Its subcellular location is the nucleus. The protein resides in the cell membrane. In terms of biological role, acts as a calcium sensor. CBL proteins interact with CIPK serine-threonine protein kinases. Binding of a CBL protein to the regulatory NAF domain of a CIPK protein lead to the activation of the kinase in a calcium-dependent manner. In Arabidopsis thaliana (Mouse-ear cress), this protein is Calcineurin B-like protein 8 (CBL8).